The following is a 131-amino-acid chain: Sulfurtransferase TusD (131 aa).

C81 serves as the catalytic Cysteine persulfide intermediate.

This sequence belongs to the DsrE/TusD family. As to quaternary structure, heterohexamer, formed by a dimer of trimers. The hexameric TusBCD complex contains 2 copies each of TusB, TusC and TusD. The TusBCD complex interacts with TusE.

It localises to the cytoplasm. Its function is as follows. Part of a sulfur-relay system required for 2-thiolation of 5-methylaminomethyl-2-thiouridine (mnm(5)s(2)U) at tRNA wobble positions. Accepts sulfur from TusA and transfers it in turn to TusE. The chain is Sulfurtransferase TusD from Photorhabdus laumondii subsp. laumondii (strain DSM 15139 / CIP 105565 / TT01) (Photorhabdus luminescens subsp. laumondii).